Consider the following 467-residue polypeptide: tRNA(Ile)-lysidine synthase (467 aa).

26-31 (SGGPDS) contacts ATP.

Belongs to the tRNA(Ile)-lysidine synthase family.

It localises to the cytoplasm. It carries out the reaction cytidine(34) in tRNA(Ile2) + L-lysine + ATP = lysidine(34) in tRNA(Ile2) + AMP + diphosphate + H(+). In terms of biological role, ligates lysine onto the cytidine present at position 34 of the AUA codon-specific tRNA(Ile) that contains the anticodon CAU, in an ATP-dependent manner. Cytidine is converted to lysidine, thus changing the amino acid specificity of the tRNA from methionine to isoleucine. This Clostridium tetani (strain Massachusetts / E88) protein is tRNA(Ile)-lysidine synthase.